Reading from the N-terminus, the 664-residue chain is DNA ligase (664 aa).

Residues 31-35, 80-81, and Glu-110 contribute to the NAD(+) site; these read DSTYD and SL. Lys-112 functions as the N6-AMP-lysine intermediate in the catalytic mechanism. The NAD(+) site is built by Arg-133, Glu-167, Lys-282, and Lys-306. Zn(2+) contacts are provided by Cys-400, Cys-403, Cys-418, and Cys-423. Residues 583 to 664 enclose the BRCT domain; the sequence is QSNAPLAGKT…LLEELAKYEG (82 aa).

Belongs to the NAD-dependent DNA ligase family. LigA subfamily. Mg(2+) is required as a cofactor. It depends on Mn(2+) as a cofactor.

The catalysed reaction is NAD(+) + (deoxyribonucleotide)n-3'-hydroxyl + 5'-phospho-(deoxyribonucleotide)m = (deoxyribonucleotide)n+m + AMP + beta-nicotinamide D-nucleotide.. Functionally, DNA ligase that catalyzes the formation of phosphodiester linkages between 5'-phosphoryl and 3'-hydroxyl groups in double-stranded DNA using NAD as a coenzyme and as the energy source for the reaction. It is essential for DNA replication and repair of damaged DNA. In Exiguobacterium sibiricum (strain DSM 17290 / CCUG 55495 / CIP 109462 / JCM 13490 / 255-15), this protein is DNA ligase.